The following is a 473-amino-acid chain: ATP synthase subunit beta (473 aa).

158 to 165 (GGAGVGKT) is an ATP binding site.

It belongs to the ATPase alpha/beta chains family. As to quaternary structure, F-type ATPases have 2 components, CF(1) - the catalytic core - and CF(0) - the membrane proton channel. CF(1) has five subunits: alpha(3), beta(3), gamma(1), delta(1), epsilon(1). CF(0) has three main subunits: a(1), b(2) and c(9-12). The alpha and beta chains form an alternating ring which encloses part of the gamma chain. CF(1) is attached to CF(0) by a central stalk formed by the gamma and epsilon chains, while a peripheral stalk is formed by the delta and b chains.

Its subcellular location is the cell membrane. It carries out the reaction ATP + H2O + 4 H(+)(in) = ADP + phosphate + 5 H(+)(out). Produces ATP from ADP in the presence of a proton gradient across the membrane. The catalytic sites are hosted primarily by the beta subunits. The sequence is that of ATP synthase subunit beta from Carboxydothermus hydrogenoformans (strain ATCC BAA-161 / DSM 6008 / Z-2901).